Reading from the N-terminus, the 757-residue chain is 5-methyltetrahydropteroyltriglutamate--homocysteine methyltransferase (757 aa).

5-methyltetrahydropteroyltri-L-glutamate-binding residues include Lys-18 and Asn-116. Ile-437–Ser-439 serves as a coordination point for L-homocysteine. Residues Ile-437–Ser-439 and Glu-490 contribute to the L-methionine site. 5-methyltetrahydropteroyltri-L-glutamate contacts are provided by residues Arg-521–Cys-522 and Trp-567. Asp-605 contacts L-homocysteine. Asp-605 serves as a coordination point for L-methionine. Zn(2+) contacts are provided by His-647, Cys-649, His-658, Asp-662, and Glu-671. His-701 serves as the catalytic Proton donor. A Zn(2+)-binding site is contributed by Cys-733.

This sequence belongs to the vitamin-B12 independent methionine synthase family. The cofactor is Zn(2+). Expressed in pollen (at protein level).

The catalysed reaction is 5-methyltetrahydropteroyltri-L-glutamate + L-homocysteine = tetrahydropteroyltri-L-glutamate + L-methionine. Its pathway is amino-acid biosynthesis; L-methionine biosynthesis via de novo pathway; L-methionine from L-homocysteine (MetE route): step 1/1. Functionally, catalyzes the transfer of a methyl group from 5-methyltetrahydrofolate to homocysteine resulting in methionine formation. The sequence is that of 5-methyltetrahydropteroyltriglutamate--homocysteine methyltransferase from Kali turgidum (Prickly saltwort).